The following is a 304-amino-acid chain: uncharacterized protein (304 aa).

This is an uncharacterized protein from Ureaplasma parvum serovar 3 (strain ATCC 700970).